The primary structure comprises 339 residues: Dihydroorotate dehydrogenase (quinone) (339 aa).

Residues 64–68 (AGADK) and T88 each bind FMN. K68 is a binding site for substrate. Position 113-117 (113-117 (NRNGF)) interacts with substrate. N141 and N174 together coordinate FMN. N174 provides a ligand contact to substrate. The active-site Nucleophile is the S177. N179 contributes to the substrate binding site. Residues K219 and T247 each contribute to the FMN site. Substrate is bound at residue 248–249 (NT). FMN-binding positions include G270, G299, and 320-321 (YS).

Belongs to the dihydroorotate dehydrogenase family. Type 2 subfamily. Monomer. It depends on FMN as a cofactor.

It localises to the cell membrane. It catalyses the reaction (S)-dihydroorotate + a quinone = orotate + a quinol. It functions in the pathway pyrimidine metabolism; UMP biosynthesis via de novo pathway; orotate from (S)-dihydroorotate (quinone route): step 1/1. Catalyzes the conversion of dihydroorotate to orotate with quinone as electron acceptor. This chain is Dihydroorotate dehydrogenase (quinone), found in Haemophilus influenzae (strain PittEE).